The chain runs to 312 residues: MRLAGIPNLAVSASTPLSLYTRFGIGGPADLFAETRDEGAFMAAIAAARESGTAVMVTGGGTNLIVSDAGFRGLVVRFADDTLSAEAERVTAGAGAVLQDLIDFANHRGLKGLETLAGIPGWVGAAVYGNAGAYGHSISERVRAVRFFDGSAVRIFDHAQCEFAYRESIFKRHKDWIIFSAELVMDAGEAGELERTSADILKVRNEKFPPTMKCAGSIFKNFLITELPPPVAGLVPANVVREGKVPAAWFLEQVGAKGMRFGGIRVADYHANLIYNAGEGTARELCAVIAELKGRVRERFGIEVEEEVQYVG.

An FAD-binding PCMH-type domain is found at 24-206 (GIGGPADLFA…SADILKVRNE (183 aa)). Arginine 166 is a catalytic residue. Catalysis depends on serine 217, which acts as the Proton donor. Glutamate 307 is an active-site residue.

Belongs to the MurB family. Requires FAD as cofactor.

Its subcellular location is the cytoplasm. The catalysed reaction is UDP-N-acetyl-alpha-D-muramate + NADP(+) = UDP-N-acetyl-3-O-(1-carboxyvinyl)-alpha-D-glucosamine + NADPH + H(+). It functions in the pathway cell wall biogenesis; peptidoglycan biosynthesis. Functionally, cell wall formation. The protein is UDP-N-acetylenolpyruvoylglucosamine reductase of Solibacter usitatus (strain Ellin6076).